Reading from the N-terminus, the 414-residue chain is Adenylosuccinate synthetase (414 aa).

GTP-binding positions include 12-18 (GDEGKGK) and 40-42 (GHT). The active-site Proton acceptor is Asp-13. 2 residues coordinate Mg(2+): Asp-13 and Gly-40. Residues 13-16 (DEGK), 38-41 (NAGH), Thr-124, Arg-138, Gln-216, Thr-231, and Arg-297 contribute to the IMP site. His-41 serves as the catalytic Proton donor. 293-299 (STTGRPR) provides a ligand contact to substrate. Residues Arg-299, 325–327 (KLD), and 403–405 (STG) contribute to the GTP site.

This sequence belongs to the adenylosuccinate synthetase family. As to quaternary structure, homodimer. It depends on Mg(2+) as a cofactor.

The protein localises to the cytoplasm. The catalysed reaction is IMP + L-aspartate + GTP = N(6)-(1,2-dicarboxyethyl)-AMP + GDP + phosphate + 2 H(+). It participates in purine metabolism; AMP biosynthesis via de novo pathway; AMP from IMP: step 1/2. In terms of biological role, plays an important role in the de novo pathway of purine nucleotide biosynthesis. Catalyzes the first committed step in the biosynthesis of AMP from IMP. This chain is Adenylosuccinate synthetase, found in Hydrogenobaculum sp. (strain Y04AAS1).